The chain runs to 891 residues: Translation initiation factor IF-2 (891 aa).

The tr-type G domain occupies 390–559 (NRAPIVTIMG…LLQSDMLELK (170 aa)). Residues 399–406 (GHVDHGKT) form a G1 region. GTP is bound at residue 399–406 (GHVDHGKT). A G2 region spans residues 424–428 (GITQS). A G3 region spans residues 445–448 (DTPG). Residues 445–449 (DTPGH) and 499–502 (NKID) contribute to the GTP site. A G4 region spans residues 499-502 (NKID). The tract at residues 535 to 537 (SAT) is G5.

Belongs to the TRAFAC class translation factor GTPase superfamily. Classic translation factor GTPase family. IF-2 subfamily.

Its subcellular location is the cytoplasm. One of the essential components for the initiation of protein synthesis. Protects formylmethionyl-tRNA from spontaneous hydrolysis and promotes its binding to the 30S ribosomal subunits. Also involved in the hydrolysis of GTP during the formation of the 70S ribosomal complex. The chain is Translation initiation factor IF-2 from Blochmanniella pennsylvanica (strain BPEN).